The sequence spans 542 residues: MATNYIFVTGGVVSSLGKGIAAASLAAILEARGLNVTMMKLDPYINVDPGTMSPTQHGEVFVTQDGAETDLDLGHYERFIRTKMTKRNNFTTGKIYSEVLRKERRGDYLGATVQVIPHITNEIKARVIEGAAGHDVAIVEVGGTVGDIESLPFLEALRQLAVQVGREKTIFMHLTLVPYIPTAGEVKTKPTQHSVKELLSIGIQPDVLICRSDRMVPPNERAKIALFCNVPEKAVISLKDVDSIYRIPALLQSQGLDDLICQRFRLACKEADLSEWEQVLYRQANPTGDVTIGMVGKYVELPDAYKSVNEALKHAGLTNRLNVHIKYIDSQDVETKGIDVLKGVDGILVPGGFGYRGVEGKILTAQYARENNIPYLGICLGMQVAFIEYARHVAGLTQANSSEFDKNCPQPVVGLITEWQDADGSVEQRSENSDLGGTMRLGAQQCHLIEGSKARELYGKETIEERHRHRYEVNNTLLPQIEAAGLKVTGLSADKKLVEIIEVPNHPWFVACQFHPEFTSTPRDGHPLFAGFVKAAKENQKK.

An amidoligase domain region spans residues 1–266; it reads MATNYIFVTG…DDLICQRFRL (266 aa). Ser-14 contacts CTP. Ser-14 contributes to the UTP binding site. ATP contacts are provided by residues 15 to 20 and Asp-72; that span reads SLGKGI. The Mg(2+) site is built by Asp-72 and Glu-140. Residues 147–149, 187–192, and Lys-223 contribute to the CTP site; these read DIE and KTKPTQ. UTP contacts are provided by residues 187 to 192 and Lys-223; that span reads KTKPTQ. 239–241 provides a ligand contact to ATP; that stretch reads KDV. The Glutamine amidotransferase type-1 domain maps to 291–542; that stretch reads TIGMVGKYVE…VKAAKENQKK (252 aa). Gly-352 is a binding site for L-glutamine. Cys-379 acts as the Nucleophile; for glutamine hydrolysis in catalysis. L-glutamine-binding positions include 380–383, Glu-403, and Arg-470; that span reads LGMQ. Active-site residues include His-515 and Glu-517.

The protein belongs to the CTP synthase family. Homotetramer.

The enzyme catalyses UTP + L-glutamine + ATP + H2O = CTP + L-glutamate + ADP + phosphate + 2 H(+). It carries out the reaction L-glutamine + H2O = L-glutamate + NH4(+). The catalysed reaction is UTP + NH4(+) + ATP = CTP + ADP + phosphate + 2 H(+). Its pathway is pyrimidine metabolism; CTP biosynthesis via de novo pathway; CTP from UDP: step 2/2. Allosterically activated by GTP, when glutamine is the substrate; GTP has no effect on the reaction when ammonia is the substrate. The allosteric effector GTP functions by stabilizing the protein conformation that binds the tetrahedral intermediate(s) formed during glutamine hydrolysis. Inhibited by the product CTP, via allosteric rather than competitive inhibition. In terms of biological role, catalyzes the ATP-dependent amination of UTP to CTP with either L-glutamine or ammonia as the source of nitrogen. Regulates intracellular CTP levels through interactions with the four ribonucleotide triphosphates. In Mannheimia succiniciproducens (strain KCTC 0769BP / MBEL55E), this protein is CTP synthase.